The sequence spans 293 residues: 3-hydroxybutyrate-oligomer hydrolase (293 aa).

This sequence belongs to the AB hydrolase superfamily.

It localises to the cytoplasm. It carries out the reaction (3R)-hydroxybutanoate pentamer + H2O = (3R)-hydroxybutanoate tetramer + (R)-3-hydroxybutanoate + H(+). The catalysed reaction is (3R)-hydroxybutanoate tetramer + H2O = (3R)-hydroxybutanoate trimer + (R)-3-hydroxybutanoate + H(+). The enzyme catalyses (3R)-hydroxybutanoate trimer + H2O = (3R)-hydroxybutanoate dimer + (R)-3-hydroxybutanoate + H(+). It catalyses the reaction (3R)-hydroxybutanoate dimer + H2O = 2 (R)-3-hydroxybutanoate + H(+). It carries out the reaction [(3R)-hydroxybutanoate](n) + H2O = [(3R)-hydroxybutanoate](n-1) + (R)-3-hydroxybutanoate + H(+). Its function is as follows. Catalyzes the degradation of various 3-hydroxybutyrate (3HB) oligomers at a high specific activity and artificial amorphous poly(3-hydroxybutyrate) (PHB) at a lower specific activity. Hydrolyzes the 3HB pentamer most efficiently than the tetramer, trimer and dimer. Does not hydrolyze native PHB granules and semicrystalline PHB. Participates in the mobilization of PHB along with other hydrolases. The polypeptide is 3-hydroxybutyrate-oligomer hydrolase (Cupriavidus necator (strain ATCC 17699 / DSM 428 / KCTC 22496 / NCIMB 10442 / H16 / Stanier 337) (Ralstonia eutropha)).